The following is a 390-amino-acid chain: Glutamate 5-kinase (390 aa).

Lysine 29 provides a ligand contact to ATP. Positions 69, 156, and 168 each coordinate substrate. 188 to 189 (TD) serves as a coordination point for ATP. A PUA domain is found at 295–374 (SGSLIVDAGA…EQFDRILGNN (80 aa)).

The protein belongs to the glutamate 5-kinase family.

Its subcellular location is the cytoplasm. It carries out the reaction L-glutamate + ATP = L-glutamyl 5-phosphate + ADP. Its pathway is amino-acid biosynthesis; L-proline biosynthesis; L-glutamate 5-semialdehyde from L-glutamate: step 1/2. In terms of biological role, catalyzes the transfer of a phosphate group to glutamate to form L-glutamate 5-phosphate. This Psychrobacter arcticus (strain DSM 17307 / VKM B-2377 / 273-4) protein is Glutamate 5-kinase.